Here is a 441-residue protein sequence, read N- to C-terminus: Proline--tRNA ligase (441 aa).

Belongs to the class-II aminoacyl-tRNA synthetase family. ProS type 2 subfamily. As to quaternary structure, homodimer.

The protein resides in the cytoplasm. The enzyme catalyses tRNA(Pro) + L-proline + ATP = L-prolyl-tRNA(Pro) + AMP + diphosphate. Its function is as follows. Catalyzes the attachment of proline to tRNA(Pro) in a two-step reaction: proline is first activated by ATP to form Pro-AMP and then transferred to the acceptor end of tRNA(Pro). This chain is Proline--tRNA ligase, found in Methylorubrum populi (strain ATCC BAA-705 / NCIMB 13946 / BJ001) (Methylobacterium populi).